The primary structure comprises 481 residues: PRAME family member 22 (481 aa).

An LRR 1; degenerate repeat occupies 99 to 126 (RWKLQVLELRDVDENFWTIWSGARPLSC). One copy of the LRR 2; degenerate repeat lies at 181–205 (HLCCTKVVNYSMSILNFRNILETVY). Residues 206–232 (PDSIQVLEIWNMCWPCMIVEFSRYLSQ) form an LRR 3; degenerate repeat. An LRR 4; degenerate repeat occupies 233–267 (MRNLRKLFISDGCRYLLSSDSQEQLVAEFSSVLLR). LRR repeat units lie at residues 268 to 293 (LEYLQMLYVRRVCFFRGHLDQLIRCL), 294 to 325 (RSPLETLALTYGFLEKVDLKCLPRYPSLSQLK), 326 to 344 (QLNLSHGALRFIRLEPLRA), 350 to 377 (AATLQTLFLVDCGIRDSKLRVILPALSC), and 378 to 402 (CSNLTTFCFHGNDTSMDGLKDLLRH).

This sequence belongs to the PRAME family.

The chain is PRAME family member 22 from Homo sapiens (Human).